We begin with the raw amino-acid sequence, 1029 residues long: Multidrug resistance protein MdtC (1029 aa).

Helical transmembrane passes span 15–35 (ILLS…LPVA), 333–353 (EVEQ…FLFL), 360–380 (LIPA…MYLC), 387–407 (LSLM…IVAL), 431–451 (VGFT…PLLL), 469–489 (VAIG…CGWL), 528–548 (LVGL…ISIP), 853–873 (VILI…LYES), 897–917 (AFDA…IGIV), 953–973 (PIMM…IASG), and 984–1004 (ITIV…TPVV).

The protein belongs to the resistance-nodulation-cell division (RND) (TC 2.A.6) family. MdtC subfamily. As to quaternary structure, part of a tripartite efflux system composed of MdtA, MdtB and MdtC. MdtC forms a heteromultimer with MdtB.

It is found in the cell inner membrane. The protein is Multidrug resistance protein MdtC of Cronobacter sakazakii (strain ATCC BAA-894) (Enterobacter sakazakii).